The sequence spans 205 residues: FMN-dependent NADH:quinone oxidoreductase (205 aa).

Residues S10, 16–18, and 96–99 contribute to the FMN site; these read SHS and MYNF.

It belongs to the azoreductase type 1 family. As to quaternary structure, homodimer. FMN is required as a cofactor.

The catalysed reaction is 2 a quinone + NADH + H(+) = 2 a 1,4-benzosemiquinone + NAD(+). It carries out the reaction N,N-dimethyl-1,4-phenylenediamine + anthranilate + 2 NAD(+) = 2-(4-dimethylaminophenyl)diazenylbenzoate + 2 NADH + 2 H(+). Its function is as follows. Quinone reductase that provides resistance to thiol-specific stress caused by electrophilic quinones. Also exhibits azoreductase activity. Catalyzes the reductive cleavage of the azo bond in aromatic azo compounds to the corresponding amines. This is FMN-dependent NADH:quinone oxidoreductase from Nostoc punctiforme (strain ATCC 29133 / PCC 73102).